The chain runs to 168 residues: Photosystem I assembly protein Ycf3 (168 aa).

TPR repeat units follow at residues 35-68 (AFTYYRDGMSAQSEGNYAEALQNYYEATRPEIDP), 72-105 (SYILYNIGLIHTSNGEHTKALEYYFRALERNPFL), and 120-153 (GEQAILQGDSEIAEAWSDQAAEYWKQAIALTPGN).

The protein belongs to the Ycf3 family.

Its subcellular location is the plastid. It localises to the chloroplast thylakoid membrane. Its function is as follows. Essential for the assembly of the photosystem I (PSI) complex. May act as a chaperone-like factor to guide the assembly of the PSI subunits. The protein is Photosystem I assembly protein Ycf3 of Lemna minor (Common duckweed).